The following is a 230-amino-acid chain: Demethylmenaquinone methyltransferase (230 aa).

S-adenosyl-L-methionine is bound by residues T62, D80, 100-101, and S117; that span reads DA.

Belongs to the class I-like SAM-binding methyltransferase superfamily. MenG/UbiE family.

It carries out the reaction a 2-demethylmenaquinol + S-adenosyl-L-methionine = a menaquinol + S-adenosyl-L-homocysteine + H(+). The protein operates within quinol/quinone metabolism; menaquinone biosynthesis; menaquinol from 1,4-dihydroxy-2-naphthoate: step 2/2. Its function is as follows. Methyltransferase required for the conversion of demethylmenaquinol (DMKH2) to menaquinol (MKH2). The sequence is that of Demethylmenaquinone methyltransferase from Mycolicibacterium paratuberculosis (strain ATCC BAA-968 / K-10) (Mycobacterium paratuberculosis).